We begin with the raw amino-acid sequence, 447 residues long: GTPase Der (447 aa).

2 EngA-type G domains span residues 2–166 (YRVA…PEYE) and 183–358 (IKVA…NQSW). GTP is bound by residues 8-15 (GRPNVGKS), 55-59 (DTGGY), 118-121 (NKID), 189-196 (GKPNAGKS), 236-240 (DTAGL), and 301-304 (NKID). A KH-like domain is found at 359–443 (KRVGTGQLNR…PIKLLLRGKE (85 aa)).

The protein belongs to the TRAFAC class TrmE-Era-EngA-EngB-Septin-like GTPase superfamily. EngA (Der) GTPase family. As to quaternary structure, associates with the 50S ribosomal subunit.

Functionally, GTPase that plays an essential role in the late steps of ribosome biogenesis. This is GTPase Der from Persephonella marina (strain DSM 14350 / EX-H1).